Consider the following 83-residue polypeptide: Major outer membrane lipoprotein (83 aa).

A signal peptide spans 1–19 (MNNVLKFSALALAAVLATG). The N-palmitoyl cysteine moiety is linked to residue C20. A lipid anchor (S-diacylglycerol cysteine) is attached at C20.

It is found in the cell outer membrane. In Pseudomonas aeruginosa (strain ATCC 15692 / DSM 22644 / CIP 104116 / JCM 14847 / LMG 12228 / 1C / PRS 101 / PAO1), this protein is Major outer membrane lipoprotein (oprI).